The chain runs to 510 residues: Inositol-3-phosphate synthase 1 (510 aa).

Residues glycine 70, glycine 71, asparagine 72, asparagine 73, aspartate 143, isoleucine 180, glutamine 190, arginine 193, threonine 230, alanine 231, asparagine 232, threonine 233, glycine 281, serine 282, aspartate 306, serine 309, asparagine 340, asparagine 341, aspartate 342, lysine 355, glycine 393, aspartate 394, aspartate 422, and serine 423 each coordinate NAD(+).

It belongs to the myo-inositol 1-phosphate synthase family. It depends on NAD(+) as a cofactor.

Its subcellular location is the cytoplasm. The protein resides in the cytosol. It is found in the nucleus. It catalyses the reaction D-glucose 6-phosphate = 1D-myo-inositol 3-phosphate. Its pathway is polyol metabolism; myo-inositol biosynthesis; myo-inositol from D-glucose 6-phosphate: step 1/2. Functionally, key enzyme in myo-inositol biosynthesis pathway that catalyzes the conversion of glucose 6-phosphate to 1-myo-inositol 1-phosphate in a NAD-dependent manner. May play a role in oxidative stress resistance and influences ascorbate levels. The protein is Inositol-3-phosphate synthase 1 of Populus euphratica (Euphrates poplar).